The following is a 1005-amino-acid chain: Ephrin type-A receptor 5 (1005 aa).

A disordered region spans residues 1–24; sequence MRGSGPRGAGRRRTQGRGGGGDTP. A signal peptide spans 1-26; sequence MRGSGPRGAGRRRTQGRGGGGDTPRV. The Extracellular segment spans residues 27–575; that stretch reads PASLAGCYSA…GASNDQSQIP (549 aa). The region spanning 62-240 is the Eph LBD domain; the sequence is EVNLLDSRTV…YYKKCPSVVR (179 aa). N-linked (GlcNAc...) asparagine glycans are attached at residues N266, N301, N371, N425, N438, and N463. 2 consecutive Fibronectin type-III domains span residues 359 to 469 and 470 to 564; these read PPSA…TNQA and APSP…TTPV. A helical membrane pass occupies residues 576–596; sequence IIGVSVTVGVILLAVMIGFLL. The Cytoplasmic segment spans residues 597–1005; sequence SGSCCECGCG…MDAVAQVTLE (409 aa). Phosphotyrosine; by autocatalysis occurs at positions 652 and 658. Positions 677–938 constitute a Protein kinase domain; that stretch reads ITIERVIGAG…DIVNMLDKLI (262 aa). ATP-binding positions include 683–691 and K709; that span reads IGAGEFGEV. The active-site Proton acceptor is the D802. Y835 and Y984 each carry phosphotyrosine; by autocatalysis. Residues 967–1005 form the SAM domain; it reads GAYRSVGEWLEATKMGRYTEIFMENGYSSMDAVAQVTLE.

It belongs to the protein kinase superfamily. Tyr protein kinase family. Ephrin receptor subfamily. As to quaternary structure, heterotetramer upon binding of the ligand. The heterotetramer is composed of an ephrin dimer and a receptor dimer. Oligomerization is probably required to induce biological responses. Interacts (via SAM domain) with SAMD5 (via SAM domain). In terms of processing, phosphorylated. Phosphorylation is stimulated by the ligand EFNA5. Dephosphorylation upon stimulation by glucose, inhibits EPHA5 forward signaling and results in insulin secretion. In terms of tissue distribution, almost exclusively expressed in the nervous system. Predominantly expressed in neurons.

The protein resides in the cell membrane. Its subcellular location is the cell projection. It localises to the axon. The protein localises to the dendrite. It catalyses the reaction L-tyrosyl-[protein] + ATP = O-phospho-L-tyrosyl-[protein] + ADP + H(+). Receptor tyrosine kinase which binds promiscuously GPI-anchored ephrin-A family ligands residing on adjacent cells, leading to contact-dependent bidirectional signaling into neighboring cells. The signaling pathway downstream of the receptor is referred to as forward signaling while the signaling pathway downstream of the ephrin ligand is referred to as reverse signaling. Among GPI-anchored ephrin-A ligands, EFNA5 most probably constitutes the cognate/functional ligand for EPHA5. Functions as an axon guidance molecule during development and may be involved in the development of the retinotectal, entorhino-hippocampal and hippocamposeptal pathways. Together with EFNA5 plays also a role in synaptic plasticity in adult brain through regulation of synaptogenesis. In addition to its function in the nervous system, the interaction of EPHA5 with EFNA5 mediates communication between pancreatic islet cells to regulate glucose-stimulated insulin secretion. This chain is Ephrin type-A receptor 5 (Epha5), found in Rattus norvegicus (Rat).